Here is a 463-residue protein sequence, read N- to C-terminus: Hexose-6-phosphate:phosphate antiporter (463 aa).

At 1-24 (MLAFLNQVRKPTLDLPLEVRRKMW) the chain is on the cytoplasmic side. The chain crosses the membrane as a helical span at residues 25-45 (FKPFMQSYLVVFIGYLTMYLI). The Periplasmic segment spans residues 46–60 (RKNFNIAQNDMISTY). Residues 61-81 (GLSMTQLGMIGLGFSITYGVG) form a helical membrane-spanning segment. Residues 82 to 96 (KTLVSYYADGKNTKQ) are Cytoplasmic-facing. A helical transmembrane segment spans residues 97-117 (FLPFMLILSAICMLGFSASMG). The Periplasmic portion of the chain corresponds to 118–120 (SGS). Residues 121–141 (VSLFLMIAFYALSGFFQSTGG) form a helical membrane-spanning segment. The Cytoplasmic portion of the chain corresponds to 142-159 (SCSYSTITKWTPRRKRGT). A helical transmembrane segment spans residues 160–180 (FLGFWNISHNLGGAGAAGVAL). Residues 181 to 189 (FGANYLFDG) are Periplasmic-facing. A helical membrane pass occupies residues 190–210 (HVIGMFIFPSIIALIVGFIGL). Topologically, residues 211-259 (RYGSDSPESYGLGKAEELFGEEISEEDKETESTDMTKWQIFVEYVLKNK) are cytoplasmic. The chain crosses the membrane as a helical span at residues 260-280 (VIWLLCFANIFLYVVRIGIDQ). Residues 281–297 (WSTVYAFQELKLSKAVA) lie on the Periplasmic side of the membrane. The chain crosses the membrane as a helical span at residues 298-318 (IQGFTLFEAGALVGTLLWGWL). The Cytoplasmic segment spans residues 319-326 (SDLANGRR). Residues 327-347 (GLVACIALALIIATLGVYQHA) form a helical membrane-spanning segment. The Periplasmic portion of the chain corresponds to 348–357 (SNEYIYLASL). The chain crosses the membrane as a helical span at residues 358–378 (FALGFLVFGPQLLIGVAAVGF). The Cytoplasmic segment spans residues 379–382 (VPKK). A helical transmembrane segment spans residues 383–403 (AIGAADGIKGTFAYLIGDSFA). The Periplasmic segment spans residues 404-425 (KLGLGMIADGTPVFGLTGWAGT). Residues 426–446 (FAALDIAAIGCICLMAIVAVM) form a helical membrane-spanning segment. Residues 447–463 (EERKIRREKKIQQLTVA) are Cytoplasmic-facing.

The protein belongs to the major facilitator superfamily. Organophosphate:Pi antiporter (OPA) (TC 2.A.1.4) family.

The protein localises to the cell inner membrane. In terms of biological role, mediates the exchange of external hexose 6-phosphate and internal inorganic phosphate. The protein is Hexose-6-phosphate:phosphate antiporter (uhpT) of Escherichia coli O157:H7.